The chain runs to 270 residues: Oxidoreductase NAD-binding domain-containing protein 1 (270 aa).

The 104-residue stretch at 20-123 (MELFSARVCD…VGGNFYFDPQ (104 aa)) folds into the FAD-binding FR-type domain. 137 to 142 (GVGINP) provides a ligand contact to NAD(+).

This is Oxidoreductase NAD-binding domain-containing protein 1 (oxnad1) from Danio rerio (Zebrafish).